The chain runs to 968 residues: Dynein axonemal intermediate chain 3 (968 aa).

Residues 1-33 (MKDTSSKRPKSKEANKKKTKDKSNADNLPKPEE) show a composition bias toward basic and acidic residues. Disordered stretches follow at residues 1–39 (MKDT…ASEP) and 136–166 (KPPA…PEPQ). Residues 141–157 (GADEQMEDEEQQEEEEE) are compositionally biased toward acidic residues. WD repeat units lie at residues 407 to 447 (ECPD…DRLQ), 480 to 536 (GHKA…VMVH), and 712 to 753 (VYSK…RQPS). The stretch at 830–857 (LHTHTDQLRVLEERVREAKQNLLAVSDR) forms a coiled coil. The segment covering 897-919 (KRQSDHQKKKKETEAEQQKKKTE) has biased composition (basic and acidic residues). The disordered stretch occupies residues 897-930 (KRQSDHQKKKKETEAEQQKKKTELVTPPKQEEEV).

In terms of assembly, part of the multisubunit axonemal dynein complex formed at least of two heavy chains and a number of intermediate and light chains.

It is found in the cytoplasm. Its function is as follows. May be involved in the regulation of cilia function. The sequence is that of Dynein axonemal intermediate chain 3 (dnai3) from Danio rerio (Zebrafish).